A 353-amino-acid polypeptide reads, in one-letter code: (S)-8-amino-7-oxononanoate synthase BioU (353 aa).

10–14 (GTGGI) lines the NAD(+) pocket. Lys-147 acts as the Nucleophile in catalysis. At Lys-147 the chain carries Allysine. An NAD(+)-binding site is contributed by 214-215 (GT). The active-site Proton acceptor is Glu-218. The active-site Proton donor and proton acceptor is the His-222.

Belongs to the BioU family. In terms of assembly, monomer.

It catalyses the reaction (8S)-8-amino-7-oxononanoate + L-lysyl-[protein] + CO2 = (S)-2-amino-6-oxohexanoyl-[protein] + (7R,8S)-8-amino-7-(carboxyamino)nonanoate + 2 H(+). The enzyme catalyses (8S)-8-amino-7-oxononanoate + L-lysyl-[protein] + NADPH + H(+) = N(6)-[(2S,3R)-2-amino-8-carboxyoctan-3-yl]-L-lysyl-[protein] + NADP(+) + H2O. It carries out the reaction N(6)-[(2S,3R)-2-amino-8-carboxyoctan-3-yl]-L-lysyl-[protein] + CO2 + NADP(+) + H2O = (S)-2-amino-6-oxohexanoyl-[protein] + (7R,8S)-8-amino-7-(carboxyamino)nonanoate + NADPH + 3 H(+). The catalysed reaction is (8S)-8-amino-7-oxononanoate + L-lysyl-[protein] + NADH + H(+) = N(6)-[(2S,3R)-2-amino-8-carboxyoctan-3-yl]-L-lysyl-[protein] + NAD(+) + H2O. It catalyses the reaction N(6)-[(2S,3R)-2-amino-8-carboxyoctan-3-yl]-L-lysyl-[protein] + CO2 + NAD(+) + H2O = (S)-2-amino-6-oxohexanoyl-[protein] + (7R,8S)-8-amino-7-(carboxyamino)nonanoate + NADH + 3 H(+). It participates in cofactor biosynthesis; biotin biosynthesis. A 'suicide' enzyme that participates in biotin synthesis. Catalyzes the formation of (S)-8-amino-7-oxononanoate (DAN-carbamic acid) from (7R,8S)-8-amino-7-(carboxyamino)nonanoate (DAN), a function equivalent to the cannonical BioA reaction and the first half-reaction of BioD. The cellular requirement for biotin is thought be low enough that this single turnover enzyme supplies a sufficient amount of the cofactor. Overall it catalyzes three reactions: formation of a covalent linkage with 8-amino-7-oxononanoate to yield a BioU-DAN conjugate at the epsilon-amino group of Lys124 of BioU using NAD(P)H, carboxylation of the conjugate to form BioU-DAN-carbamic acid, and release of DAN-carbamic acid using NAD(P)+. Complements a bioA deletion in E.coli. The chain is (S)-8-amino-7-oxononanoate synthase BioU from Haloferax mediterranei (strain ATCC 33500 / DSM 1411 / JCM 8866 / NBRC 14739 / NCIMB 2177 / R-4) (Halobacterium mediterranei).